Reading from the N-terminus, the 358-residue chain is Trace amine-associated receptor 7a (358 aa).

The Extracellular portion of the chain corresponds to 1–47 (MDKLVDHFLSDQSRTMNEDLFSATSTELCYENLNRSCVRSPYSPGPR). Asn34 is a glycosylation site (N-linked (GlcNAc...) asparagine). Intrachain disulfides connect Cys37/Cys201 and Cys120/Cys205. A helical membrane pass occupies residues 48 to 68 (LILYAVFGFGAALAVCGNLLV). Residues 69 to 83 (MTSILHFRQLHSPAN) are Cytoplasmic-facing. Residues 84 to 104 (FLVASLACADFLVGLTVMPFS) traverse the membrane as a helical segment. Residues 105 to 121 (TVRSVEGCWYFGESYCK) are Extracellular-facing. The helical transmembrane segment at 122 to 143 (FHSCFEGSFCYSSIFHLCFISV) threads the bilayer. The Cytoplasmic segment spans residues 144 to 166 (DRYIAVSDPLTYPTRFTASVSGK). A helical transmembrane segment spans residues 167 to 187 (CITFSWLLSIIYSFSLLYTGA). The Extracellular portion of the chain corresponds to 188–212 (NEAGLEDLVSVLTCVGGCQIAVNQS). N-linked (GlcNAc...) asparagine glycosylation occurs at Asn210. Residues 213-233 (WVFINFLLFLIPTLVMMTVYS) form a helical membrane-spanning segment. Residues 234–274 (KIFLIAKQQAQNIEKMSKQTARASESYKDRVAKRERKAAKT) are Cytoplasmic-facing. Residues 275–295 (LGIAVAAFLLSWLPYFIDSII) traverse the membrane as a helical segment. Residues 296–309 (DAFLGFITPTYVYE) lie on the Extracellular side of the membrane. The helical transmembrane segment at 310–333 (ILVWIAYYNSAMNPLIYAFFYPWF) threads the bilayer. The Cytoplasmic portion of the chain corresponds to 334–358 (RKAIKLIVTGKILRENSSTTNLFPE).

Belongs to the G-protein coupled receptor 1 family. As to expression, specifically expressed in neurons of the olfactory epithelium.

It is found in the cell membrane. In terms of biological role, olfactory receptor specific for N,N-dimethylalkylamines trace amines. Trace amine compounds are enriched in animal body fluids and act on trace amine-associated receptors (TAARs) to elicit both intraspecific and interspecific innate behaviors. Ligand-binding causes a conformation change that triggers signaling via G(s)-class of G alpha proteins (GNAL or GNAS). The chain is Trace amine-associated receptor 7a from Mus musculus (Mouse).